A 264-amino-acid polypeptide reads, in one-letter code: 3-methyl-2-oxobutanoate hydroxymethyltransferase (264 aa).

2 residues coordinate Mg(2+): aspartate 45 and aspartate 84. Residues aspartate 45 to serine 46, aspartate 84, and lysine 112 contribute to the 3-methyl-2-oxobutanoate site. Residue glutamate 114 coordinates Mg(2+). Catalysis depends on glutamate 181, which acts as the Proton acceptor.

This sequence belongs to the PanB family. Homodecamer; pentamer of dimers. The cofactor is Mg(2+).

It localises to the cytoplasm. It catalyses the reaction 3-methyl-2-oxobutanoate + (6R)-5,10-methylene-5,6,7,8-tetrahydrofolate + H2O = 2-dehydropantoate + (6S)-5,6,7,8-tetrahydrofolate. The protein operates within cofactor biosynthesis; (R)-pantothenate biosynthesis; (R)-pantoate from 3-methyl-2-oxobutanoate: step 1/2. Catalyzes the reversible reaction in which hydroxymethyl group from 5,10-methylenetetrahydrofolate is transferred onto alpha-ketoisovalerate to form ketopantoate. The protein is 3-methyl-2-oxobutanoate hydroxymethyltransferase of Shewanella sediminis (strain HAW-EB3).